The primary structure comprises 83 residues: Three-finger toxin MALT0066C (83 aa).

The first 21 residues, 1 to 21 (MKTLLLTLVVVTIVCLDFGHT), serve as a signal peptide directing secretion. Cystine bridges form between Cys24/Cys45, Cys38/Cys62, Cys64/Cys75, and Cys76/Cys81.

The protein belongs to the three-finger toxin family. Short-chain subfamily. Type I alpha-neurotoxin sub-subfamily. As to quaternary structure, dimer. In terms of tissue distribution, expressed by the venom gland.

It is found in the secreted. Its function is as follows. Binds to muscle nicotinic acetylcholine receptor (nAChR) and inhibit acetylcholine from binding to the receptor, thereby impairing neuromuscular transmission. The protein is Three-finger toxin MALT0066C of Micrurus altirostris (Uruguayan coral snake).